Here is a 338-residue protein sequence, read N- to C-terminus: tRNA N6-adenosine threonylcarbamoyltransferase (338 aa).

Positions 112 and 116 each coordinate Fe cation. Substrate-binding positions include 135-139 (LVSGG), Asp168, Gly181, and Asn273. Asp301 contacts Fe cation.

Belongs to the KAE1 / TsaD family. Fe(2+) is required as a cofactor.

The protein resides in the cytoplasm. It catalyses the reaction L-threonylcarbamoyladenylate + adenosine(37) in tRNA = N(6)-L-threonylcarbamoyladenosine(37) in tRNA + AMP + H(+). Its function is as follows. Required for the formation of a threonylcarbamoyl group on adenosine at position 37 (t(6)A37) in tRNAs that read codons beginning with adenine. Is involved in the transfer of the threonylcarbamoyl moiety of threonylcarbamoyl-AMP (TC-AMP) to the N6 group of A37, together with TsaE and TsaB. TsaD likely plays a direct catalytic role in this reaction. The protein is tRNA N6-adenosine threonylcarbamoyltransferase of Buchnera aphidicola subsp. Baizongia pistaciae (strain Bp).